The sequence spans 678 residues: Probable antibacterial peptide polyprotein (678 aa).

Tandem repeats lie at residues 1 to 67 (MRSP…PEVR), 68 to 114 (ERRS…PEVR), 115 to 161 (ERRS…PEVR), 162 to 208 (ERRS…PEVR), 209 to 255 (ERRS…PEVR), 256 to 302 (ERGS…PEVR), 303 to 349 (ERRS…PEVR), 350 to 396 (ERRS…PEVR), 397 to 443 (ERRS…PEVR), 444 to 490 (ERRS…PEVR), 491 to 537 (ERRS…PEVR), 538 to 584 (ERRS…PEVR), 585 to 631 (ERRS…PEVR), and 632 to 678 (ERRS…PEVR). The 14 X approximate tandem repeats stretch occupies residues 1–678 (MRSPRVIHLA…SEGVVLPEVR (678 aa)). O-linked (GalNAc...) threonine glycosylation occurs at Thr-32. 2 disordered regions span residues 58 to 97 (SEAELLPEVRERRSPVDKGGYLPRPTPPRPVYRSRRDASL) and 113 to 678 (VRER…PEVR). Basic and acidic residues predominate over residues 64-73 (PEVRERRSPV). Thr-83 and Thr-130 each carry an O-linked (GalNAc...) threonine glycan. Positions 145-157 (ESELSPLSEAEVL) are enriched in low complexity. Positions 158-167 (PEVRERRSPV) are enriched in basic and acidic residues. An O-linked (GalNAc...) threonine glycan is attached at Thr-177. The span at 188–204 (VASLESELSPLSEAEVL) shows a compositional bias: low complexity. A compositionally biased stretch (basic and acidic residues) spans 205-214 (PEVRERRSPV). O-linked (GalNAc...) threonine glycans are attached at residues Thr-224 and Thr-271. A compositionally biased stretch (basic and acidic residues) spans 299–308 (PEVRERRSPV). O-linked (GalNAc...) threonine glycosylation occurs at Thr-318. The span at 333–345 (ESELSPLSEAEVL) shows a compositional bias: low complexity. Residues 346-355 (PEVRERRSPV) show a composition bias toward basic and acidic residues. O-linked (GalNAc...) threonine glycosylation is present at Thr-365. Positions 380–392 (ESELSPLSEAEVL) are enriched in low complexity. The span at 393 to 402 (PEVRERRSPV) shows a compositional bias: basic and acidic residues. Residue Thr-412 is glycosylated (O-linked (GalNAc...) threonine). Low complexity predominate over residues 427–439 (ESELSPLSEAEVL). Positions 440–449 (PEVRERRSPV) are enriched in basic and acidic residues. O-linked (GalNAc...) threonine glycosylation occurs at Thr-459. Positions 474 to 486 (ESELSPLSEAEVL) are enriched in low complexity. Basic and acidic residues predominate over residues 487 to 496 (PEVRERRSPV). Thr-506 carries O-linked (GalNAc...) threonine glycosylation. The span at 521 to 533 (ESELSPSSEAEVL) shows a compositional bias: low complexity. Residues 534–543 (PEVRERRSPV) show a composition bias toward basic and acidic residues. Thr-553 is a glycosylation site (O-linked (GalNAc...) threonine). A compositionally biased stretch (low complexity) spans 568 to 580 (ESELSPLSEAEVL). Basic and acidic residues predominate over residues 581 to 590 (PEVRERRSPV). The O-linked (GalNAc...) threonine glycan is linked to Thr-600. Residues 615–627 (ESELSPLSEAEGL) are compositionally biased toward low complexity. Thr-647 is a glycosylation site (O-linked (GalNAc...) threonine).

The protein resides in the secreted. Functionally, has antibacterial activity in vitro. This Riptortus clavatus (Bean bug) protein is Probable antibacterial peptide polyprotein.